Here is a 155-residue protein sequence, read N- to C-terminus: Small ribosomal subunit protein uS7c (155 aa).

This sequence belongs to the universal ribosomal protein uS7 family. As to quaternary structure, part of the 30S ribosomal subunit.

It localises to the plastid. The protein resides in the chloroplast. Functionally, one of the primary rRNA binding proteins, it binds directly to 16S rRNA where it nucleates assembly of the head domain of the 30S subunit. This is Small ribosomal subunit protein uS7c (rps7) from Cedrus deodara (Deodar cedar).